The primary structure comprises 189 residues: GTP cyclohydrolase 1 (189 aa).

Residues Cys-78, His-81, and Cys-150 each coordinate Zn(2+).

Belongs to the GTP cyclohydrolase I family. As to quaternary structure, toroid-shaped homodecamer, composed of two pentamers of five dimers.

The catalysed reaction is GTP + H2O = 7,8-dihydroneopterin 3'-triphosphate + formate + H(+). Its pathway is cofactor biosynthesis; 7,8-dihydroneopterin triphosphate biosynthesis; 7,8-dihydroneopterin triphosphate from GTP: step 1/1. This is GTP cyclohydrolase 1 from Bacillus pumilus (strain SAFR-032).